The primary structure comprises 304 residues: Glutaminase (304 aa).

Substrate-binding residues include Ser-63, Asn-113, Glu-157, Asn-164, Tyr-188, Tyr-240, and Val-258.

The protein belongs to the glutaminase family. In terms of assembly, homotetramer.

The enzyme catalyses L-glutamine + H2O = L-glutamate + NH4(+). This chain is Glutaminase, found in Christiangramia forsetii (strain DSM 17595 / CGMCC 1.15422 / KT0803) (Gramella forsetii).